Here is a 526-residue protein sequence, read N- to C-terminus: Bifunctional purine biosynthesis protein PurH (526 aa).

The MGS-like domain maps to 15-161 (DVVPIRRALI…KNHANVAIVV (147 aa)).

It belongs to the PurH family.

It catalyses the reaction (6R)-10-formyltetrahydrofolate + 5-amino-1-(5-phospho-beta-D-ribosyl)imidazole-4-carboxamide = 5-formamido-1-(5-phospho-D-ribosyl)imidazole-4-carboxamide + (6S)-5,6,7,8-tetrahydrofolate. The enzyme catalyses IMP + H2O = 5-formamido-1-(5-phospho-D-ribosyl)imidazole-4-carboxamide. It participates in purine metabolism; IMP biosynthesis via de novo pathway; 5-formamido-1-(5-phospho-D-ribosyl)imidazole-4-carboxamide from 5-amino-1-(5-phospho-D-ribosyl)imidazole-4-carboxamide (10-formyl THF route): step 1/1. The protein operates within purine metabolism; IMP biosynthesis via de novo pathway; IMP from 5-formamido-1-(5-phospho-D-ribosyl)imidazole-4-carboxamide: step 1/1. The sequence is that of Bifunctional purine biosynthesis protein PurH from Leifsonia xyli subsp. xyli (strain CTCB07).